The sequence spans 188 residues: Phosphatidylinositol N-acetylglucosaminyltransferase subunit H (188 aa).

This sequence belongs to the PIGH family. As to quaternary structure, component of the glycosylphosphatidylinositol-N-acetylglucosaminyltransferase (GPI-GnT) complex composed at least by PIGA, PIGC, PIGH, PIGP, PIGQ, PIGY and DPM2. Interacts with PIGQ.

Its subcellular location is the cytoplasm. The protein operates within glycolipid biosynthesis; glycosylphosphatidylinositol-anchor biosynthesis. In terms of biological role, part of the glycosylphosphatidylinositol-N-acetylglucosaminyltransferase (GPI-GnT) complex that catalyzes the transfer of N-acetylglucosamine from UDP-N-acetylglucosamine to phosphatidylinositol and participates in the first step of GPI biosynthesis. The chain is Phosphatidylinositol N-acetylglucosaminyltransferase subunit H from Bos taurus (Bovine).